Here is a 462-residue protein sequence, read N- to C-terminus: MAQIILDDKLEKLNVNPVFVDLKNQQDKSIIVQNYENHQTIKRTVPNALIDMIKFAWANHLPVSLRPDDFWIQILTQFATHVNLNSELYQKYFSNKDNPDSETQISIGYTDFDNVQDVPIDDFVQKILSKLNECIERNDLITKLQCDFTTSNSITLLTSQIAFMYMADKFFSYKMILGCGIPSIKLDGTIDDWTNLKSKIRTLLEIADDKIKSWLSNLEIITNKIITSIKYPGVFVNFWKKMFYVERCGSGSQTCSKGWICHLFLYDKSYCKLGHVFDSENELYDLKGITFWDDFPNCEVKCPFMVNSESRPHYLNAGIYGFTMIDDHLRLISGFTVSKLDYDEWSFDDKPIHILKINFSQETYSRIKYNGKLIHEWYQITGVTNEDRLEYDCDNTIIYYNTESSSIDFIYRGENKYGPVCSYQKVKFTDGGVKVTSKGSASLEYFIKNSIKIYEERDSTHN.

This is an uncharacterized protein from Acanthamoeba polyphaga (Amoeba).